Here is a 367-residue protein sequence, read N- to C-terminus: Fructose-1,6-bisphosphatase class 1 3 (367 aa).

This sequence belongs to the FBPase class 1 family. In terms of assembly, homotetramer.

The protein localises to the cytoplasm. It catalyses the reaction beta-D-fructose 1,6-bisphosphate + H2O = beta-D-fructose 6-phosphate + phosphate. The protein operates within carbohydrate biosynthesis; gluconeogenesis. In Paraburkholderia phymatum (strain DSM 17167 / CIP 108236 / LMG 21445 / STM815) (Burkholderia phymatum), this protein is Fructose-1,6-bisphosphatase class 1 3.